Here is a 162-residue protein sequence, read N- to C-terminus: Interleukin-15 (162 aa).

A signal peptide spans 1–29 (MRILKPYLRSTSIQCYLCLLLNSHFLTEA). Positions 30 to 48 (GIHVFILGCISAGLPKTEA) are excised as a propeptide. Disulfide bonds link C83-C133 and C90-C136. Residues N113, N121, and N127 are each glycosylated (N-linked (GlcNAc...) asparagine).

It belongs to the IL-15/IL-21 family.

Its subcellular location is the secreted. Functionally, cytokine that plays a major role in the development of inflammatory and protective immune responses to microbial invaders and parasites by modulating immune cells of both the innate and adaptive immune systems. Stimulates the proliferation of natural killer cells, T-cells and B-cells and promotes the secretion of several cytokines. In monocytes, induces the production of IL8 and monocyte chemotactic protein 1/CCL2, two chemokines that attract neutrophils and monocytes respectively to sites of infection. Unlike most cytokines, which are secreted in soluble form, IL15 is expressed in association with its high affinity IL15RA on the surface of IL15-producing cells and delivers signals to target cells that express IL2RB and IL2RG receptor subunits. Binding to its receptor triggers the phosphorylation of JAK1 and JAK3 and the recruitment and subsequent phosphorylation of signal transducer and activator of transcription-3/STAT3 and STAT5. In mast cells, induces the rapid tyrosine phosphorylation of STAT6 and thereby controls mast cell survival and release of cytokines such as IL4. The polypeptide is Interleukin-15 (IL15) (Ovis aries (Sheep)).